Reading from the N-terminus, the 221-residue chain is Ribosomal RNA small subunit methyltransferase G (221 aa).

Residues glycine 85, leucine 90, 138–139 (AE), and arginine 151 each bind S-adenosyl-L-methionine.

This sequence belongs to the methyltransferase superfamily. RNA methyltransferase RsmG family.

It localises to the cytoplasm. It catalyses the reaction guanosine(527) in 16S rRNA + S-adenosyl-L-methionine = N(7)-methylguanosine(527) in 16S rRNA + S-adenosyl-L-homocysteine. Its function is as follows. Specifically methylates the N7 position of guanine in position 527 of 16S rRNA. The chain is Ribosomal RNA small subunit methyltransferase G from Caulobacter sp. (strain K31).